Consider the following 205-residue polypeptide: N-(5'-phosphoribosyl)anthranilate isomerase (205 aa).

The protein belongs to the TrpF family.

It carries out the reaction N-(5-phospho-beta-D-ribosyl)anthranilate = 1-(2-carboxyphenylamino)-1-deoxy-D-ribulose 5-phosphate. Its pathway is amino-acid biosynthesis; L-tryptophan biosynthesis; L-tryptophan from chorismate: step 3/5. The protein is N-(5'-phosphoribosyl)anthranilate isomerase of Maridesulfovibrio salexigens (strain ATCC 14822 / DSM 2638 / NCIMB 8403 / VKM B-1763) (Desulfovibrio salexigens).